Here is a 320-residue protein sequence, read N- to C-terminus: Heterogeneous nuclear ribonucleoprotein A1-like 3 (320 aa).

RRM domains lie at 14-97 (RKLF…DSQR) and 105-184 (KKIF…LSKQ). Disordered regions lie at residues 182 to 218 (SKQE…NFGR) and 271 to 320 (SNFG…GRRF). Residues 197 to 218 (SGSGNFGGGRGGGFGGNDNFGR) show a composition bias toward gly residues. The segment covering 308 to 320 (SSSSSSYGSGRRF) has biased composition (low complexity).

The sequence is that of Heterogeneous nuclear ribonucleoprotein A1-like 3 from Homo sapiens (Human).